Here is a 430-residue protein sequence, read N- to C-terminus: Shufflon protein A' (430 aa).

The segment at 1–361 (MKKYDRGWAS…TGAILSCQSG (361 aa)) is constant region. Positions 362–430 (TWGTIGGKLK…GCIASCVTLN (69 aa)) are variable region.

The polypeptide is Shufflon protein A' (Escherichia coli).